A 110-amino-acid chain; its full sequence is Large ribosomal subunit protein uL22 (110 aa).

This sequence belongs to the universal ribosomal protein uL22 family. Part of the 50S ribosomal subunit.

Functionally, this protein binds specifically to 23S rRNA; its binding is stimulated by other ribosomal proteins, e.g. L4, L17, and L20. It is important during the early stages of 50S assembly. It makes multiple contacts with different domains of the 23S rRNA in the assembled 50S subunit and ribosome. Its function is as follows. The globular domain of the protein is located near the polypeptide exit tunnel on the outside of the subunit, while an extended beta-hairpin is found that lines the wall of the exit tunnel in the center of the 70S ribosome. This chain is Large ribosomal subunit protein uL22, found in Actinobacillus pleuropneumoniae serotype 5b (strain L20).